The chain runs to 407 residues: 1-deoxy-D-xylulose 5-phosphate reductoisomerase (407 aa).

Residues Thr27, Gly28, Ser29, Ile30, Ala53, Arg54, Asn55, and Asn140 each contribute to the NADPH site. Lys141 is a 1-deoxy-D-xylulose 5-phosphate binding site. Glu142 provides a ligand contact to NADPH. Asp166 contributes to the Mn(2+) binding site. Residues Ser167, Glu168, Ser192, and His215 each coordinate 1-deoxy-D-xylulose 5-phosphate. Glu168 contacts Mn(2+). Residue Gly221 coordinates NADPH. 1-deoxy-D-xylulose 5-phosphate is bound by residues Ser228, Asn233, Lys234, and Glu237. Glu237 contacts Mn(2+).

The protein belongs to the DXR family. Mg(2+) is required as a cofactor. Mn(2+) serves as cofactor.

The catalysed reaction is 2-C-methyl-D-erythritol 4-phosphate + NADP(+) = 1-deoxy-D-xylulose 5-phosphate + NADPH + H(+). It functions in the pathway isoprenoid biosynthesis; isopentenyl diphosphate biosynthesis via DXP pathway; isopentenyl diphosphate from 1-deoxy-D-xylulose 5-phosphate: step 1/6. Catalyzes the NADPH-dependent rearrangement and reduction of 1-deoxy-D-xylulose-5-phosphate (DXP) to 2-C-methyl-D-erythritol 4-phosphate (MEP). In Oleidesulfovibrio alaskensis (strain ATCC BAA-1058 / DSM 17464 / G20) (Desulfovibrio alaskensis), this protein is 1-deoxy-D-xylulose 5-phosphate reductoisomerase.